A 127-amino-acid polypeptide reads, in one-letter code: Small ribosomal subunit protein eS8 (127 aa).

This sequence belongs to the eukaryotic ribosomal protein eS8 family. In terms of assembly, part of the 30S ribosomal subunit.

The protein is Small ribosomal subunit protein eS8 (rps8e) of Pyrococcus abyssi (strain GE5 / Orsay).